The chain runs to 329 residues: 4-hydroxythreonine-4-phosphate dehydrogenase (329 aa).

Residues His-136 and Thr-137 each coordinate substrate. 3 residues coordinate a divalent metal cation: His-166, His-211, and His-266. Substrate is bound by residues Lys-274, Asn-283, and Arg-292.

This sequence belongs to the PdxA family. In terms of assembly, homodimer. Zn(2+) is required as a cofactor. It depends on Mg(2+) as a cofactor. Co(2+) serves as cofactor.

Its subcellular location is the cytoplasm. The enzyme catalyses 4-(phosphooxy)-L-threonine + NAD(+) = 3-amino-2-oxopropyl phosphate + CO2 + NADH. It functions in the pathway cofactor biosynthesis; pyridoxine 5'-phosphate biosynthesis; pyridoxine 5'-phosphate from D-erythrose 4-phosphate: step 4/5. In terms of biological role, catalyzes the NAD(P)-dependent oxidation of 4-(phosphooxy)-L-threonine (HTP) into 2-amino-3-oxo-4-(phosphooxy)butyric acid which spontaneously decarboxylates to form 3-amino-2-oxopropyl phosphate (AHAP). This is 4-hydroxythreonine-4-phosphate dehydrogenase from Neisseria meningitidis serogroup B (strain ATCC BAA-335 / MC58).